The following is a 506-amino-acid chain: Glutamate--tRNA ligase (506 aa).

The short motif at 24–34 is the 'HIGH' region element; that stretch reads PSPTGLQHIGG. 4 residues coordinate Zn(2+): C121, C123, C148, and H150. The 'KMSKS' region signature appears at 266–270; it reads KLSKR. Residue K269 coordinates ATP.

It belongs to the class-I aminoacyl-tRNA synthetase family. Glutamate--tRNA ligase type 1 subfamily. Monomer. The cofactor is Zn(2+).

Its subcellular location is the cytoplasm. It catalyses the reaction tRNA(Glu) + L-glutamate + ATP = L-glutamyl-tRNA(Glu) + AMP + diphosphate. Catalyzes the attachment of glutamate to tRNA(Glu) in a two-step reaction: glutamate is first activated by ATP to form Glu-AMP and then transferred to the acceptor end of tRNA(Glu). This Borrelia recurrentis (strain A1) protein is Glutamate--tRNA ligase.